We begin with the raw amino-acid sequence, 208 residues long: Uracil phosphoribosyltransferase (208 aa).

Residues arginine 78, arginine 103, and 130-138 each bind 5-phospho-alpha-D-ribose 1-diphosphate; that span reads DPMLATANS. Uracil contacts are provided by residues isoleucine 193 and 198-200; that span reads GDA. Residue aspartate 199 coordinates 5-phospho-alpha-D-ribose 1-diphosphate.

It belongs to the UPRTase family. Mg(2+) is required as a cofactor.

The enzyme catalyses UMP + diphosphate = 5-phospho-alpha-D-ribose 1-diphosphate + uracil. Its pathway is pyrimidine metabolism; UMP biosynthesis via salvage pathway; UMP from uracil: step 1/1. Allosterically activated by GTP. In terms of biological role, catalyzes the conversion of uracil and 5-phospho-alpha-D-ribose 1-diphosphate (PRPP) to UMP and diphosphate. This chain is Uracil phosphoribosyltransferase, found in Brucella melitensis biotype 2 (strain ATCC 23457).